A 158-amino-acid chain; its full sequence is L-alanine exporter AlaE (158 aa).

4 helical membrane passes run 23 to 43 (FAMV…VSGM), 53 to 73 (LVAI…RDAV), 92 to 112 (VIAY…FVGA), and 117 to 137 (IITA…AYGY).

The protein belongs to the AlaE exporter family.

Its subcellular location is the cell inner membrane. Exports L-alanine. This is L-alanine exporter AlaE from Cronobacter sakazakii (strain ATCC BAA-894) (Enterobacter sakazakii).